A 261-amino-acid polypeptide reads, in one-letter code: Early E1A protein (261 aa).

Residues 43–51 form an interaction with RB1 in competition with E2F1 region; sequence PTLHDLYDL. Residues 78-149 are interaction with UBE2I; that stretch reads EGLDINPPPE…VNEGVKAASD (72 aa). Residues 106–110 carry the PXLXP motif, interaction with host ZMYND11 motif; sequence PDLGA. The LXCXE motif, interaction with host RB1 and TMEM173/STING signature appears at 115 to 119; the sequence is LRCYE. Residues 163–183 fold into a zinc finger; it reads CKSCEFHRNNTGMKELLCSLC. The interval 197–261 is disordered; it reads SDDESPSPDS…DLSTRKLPRQ (65 aa). Low complexity predominate over residues 203-212; the sequence is SPDSTTSPPE. The short motif at 250–254 is the PXDLS motif, CTBP-binding element; that stretch reads PLDLS. The Nuclear localization signal motif lies at 256-261; the sequence is RKLPRQ.

Belongs to the adenoviridae E1A protein family. Interacts with host UBE2I; this interaction interferes with polySUMOylation. Interacts with host RB1; this interaction induces the aberrant dissociation of RB1-E2F1 complex thereby disrupting the activity of RB1 and activating E2F1-regulated genes. Interacts with host ATF7; the interaction enhances ATF7-mediated viral transactivation activity which requires the zinc binding domains of both proteins. Isoform early E1A 32 kDa protein and isoform early E1A 26 kDa protein interact (via N-terminus) with CUL1 and E3 ubiquitin ligase RBX1; these interactions inhibit RBX1-CUL1-dependent elongation reaction of ubiquitin chains and attenuate ubiquitination of SCF(FBXW7) target proteins. Interacts (via PXLXP motif) with host ZMYND11/BS69 (via MYND-type zinc finger); this interaction inhibits E1A mediated transactivation. Interacts with host EP300; this interaction stimulates the acetylation of RB1 by recruiting EP300 and RB1 into a multimeric-protein complex. Interacts with host CTBP1 and CTBP2; this interaction seems to potentiate viral replication. Interacts with host DCAF7. Interacts with host DYRK1A. Interacts with host KPNA4; this interaction allows E1A import into the host nucleus. Interacts with host EP400; this interaction stabilizes MYC. Interacts with host TBP protein; this interaction probably disrupts the TBP-TATA complex. Interacts (via LXCXE motif) with host TMEM173/STING; this interaction impairs the ability of TMEM173/STING to sense cytosolic DNA and promote the production of type I interferon (IFN-alpha and IFN-beta). Interacts (via C-terminus) with host ZBED1/hDREF (via C-terminus); the interaction is direct.

The protein resides in the host nucleus. Plays a role in viral genome replication by driving entry of quiescent cells into the cell cycle. Stimulation of progression from G1 to S phase allows the virus to efficiently use the cellular DNA replicating machinery to achieve viral genome replication. E1A protein has both transforming and trans-activating activities. Induces the disassembly of the E2F1 transcription factor from RB1 by direct competition for the same binding site on RB1, with subsequent transcriptional activation of E2F1-regulated S-phase genes and of the E2 region of the adenoviral genome. Release of E2F1 leads to the ARF-mediated inhibition of MDM2 and causes TP53/p53 to accumulate because it is not targeted for degradation by MDM2-mediated ubiquitination anymore. This increase in TP53, in turn, would arrest the cell proliferation and direct its death but this effect is counteracted by the viral protein E1B-55K. Inactivation of the ability of RB1 to arrest the cell cycle is critical for cellular transformation, uncontrolled cellular growth and proliferation induced by viral infection. Interaction with RBX1 and CUL1 inhibits ubiquitination of the proteins targeted by SCF(FBXW7) ubiquitin ligase complex, and may be linked to unregulated host cell proliferation. The tumorigenesis-restraining activity of E1A may be related to the disruption of the host CtBP-CtIP complex through the CtBP binding motif. Interaction with host TMEM173/STING impairs the ability of TMEM173/STING to sense cytosolic DNA and promote the production of type I interferon (IFN-alpha and IFN-beta). Promotes the sumoylation of host ZBED1/hDREF with SUMO1. This chain is Early E1A protein, found in Human adenovirus B serotype 7 (HAdV-7).